The following is a 146-amino-acid chain: Large ribosomal subunit protein uL15 (146 aa).

Residues 1-13 (MKLHELKPAEGSR) are compositionally biased toward basic and acidic residues. A disordered region spans residues 1-57 (MKLHELKPAEGSRKVRNRVGRGTSSGNGKTSGRGQKGQKARSGVGLRPGFEGGQTPL). Over residues 23 to 35 (TSSGNGKTSGRGQ) the composition is skewed to gly residues.

Belongs to the universal ribosomal protein uL15 family. As to quaternary structure, part of the 50S ribosomal subunit.

Its function is as follows. Binds to the 23S rRNA. The polypeptide is Large ribosomal subunit protein uL15 (Streptococcus thermophilus (strain CNRZ 1066)).